A 643-amino-acid polypeptide reads, in one-letter code: Phosphomethylpyrimidine synthase (643 aa).

Substrate contacts are provided by residues asparagine 221, methionine 250, tyrosine 279, histidine 315, 335–337, 376–379, and glutamate 415; these read SRG and DGLR. Residue histidine 419 coordinates Zn(2+). A substrate-binding site is contributed by tyrosine 442. Residue histidine 483 participates in Zn(2+) binding. [4Fe-4S] cluster-binding residues include cysteine 563, cysteine 566, and cysteine 571.

The protein belongs to the ThiC family. Homodimer. It depends on [4Fe-4S] cluster as a cofactor.

It carries out the reaction 5-amino-1-(5-phospho-beta-D-ribosyl)imidazole + S-adenosyl-L-methionine = 4-amino-2-methyl-5-(phosphooxymethyl)pyrimidine + CO + 5'-deoxyadenosine + formate + L-methionine + 3 H(+). Its pathway is cofactor biosynthesis; thiamine diphosphate biosynthesis. Functionally, catalyzes the synthesis of the hydroxymethylpyrimidine phosphate (HMP-P) moiety of thiamine from aminoimidazole ribotide (AIR) in a radical S-adenosyl-L-methionine (SAM)-dependent reaction. This is Phosphomethylpyrimidine synthase from Nitrobacter hamburgensis (strain DSM 10229 / NCIMB 13809 / X14).